The following is a 1404-amino-acid chain: Microtubule organization protein AKNA (1404 aa).

2 disordered regions span residues 1-304 (MASS…VSPL) and 317-382 (QHKQ…RPLI). A Phosphoserine modification is found at Ser-51. Over residues 70–91 (WDPDMQDSEESSGEETEADDAS) the composition is skewed to acidic residues. Over residues 185–203 (KSWSSGTVSLRQPSDSLGS) the composition is skewed to polar residues. A Phosphoserine modification is found at Ser-302. Phosphoserine occurs at positions 485 and 520. The disordered stretch occupies residues 494–549 (AEWWPDPAQDPQASEATGWPFPRTDLSPSSSPGVATPGRLPQSQGIATDQPSTGQT). The segment covering 534 to 549 (PQSQGIATDQPSTGQT) has biased composition (polar residues). At Ser-617 the chain carries Phosphoserine. Basic and acidic residues predominate over residues 645–659 (MDQTQRETEPCRPDL). The interval 645–708 (MDQTQRETEP…TSPGSSCTLP (64 aa)) is disordered. Composition is skewed to polar residues over residues 660 to 674 (QDSTPTMSFLPQSAH) and 686 to 707 (DGQTYQEPATTTTTSPGSSCTL). Ser-750 and Ser-753 each carry phosphoserine. Residues 754–787 (LPEALRDEDEDDLEEEEEEQDHQGPLEVDSPATA) are PEST. 2 disordered regions span residues 755–1038 (PEAL…STAN) and 1085–1185 (HSTQ…RERV). The span at 759–773 (RDEDEDDLEEEEEEQ) shows a compositional bias: acidic residues. The span at 803-813 (TQAEESHRDAT) shows a compositional bias: basic and acidic residues. 2 positions are modified to phosphoserine: Ser-831 and Ser-860. The PEST stretch occupies residues 885–906 (HTEEPWMVSPETDSGFVGSETS). Composition is skewed to polar residues over residues 903-914 (SETSIVSPFTQT), 921-933 (HVSTSGPSAQHLT), and 963-974 (SRTQQHFSSLSS). Ser-971 is modified (phosphoserine). The segment covering 1015–1029 (TSPDSAPAPTAASTP) has biased composition (low complexity). Polar residues predominate over residues 1085–1098 (HSTQTQEKLGSSPS). A DNA-binding region (a.T hook) is located at residues 1088–1096 (QTQEKLGSS). Phosphoserine is present on residues Ser-1144 and Ser-1145. Residues 1155–1167 (SSEKSRTFEEHPE) show a composition bias toward basic and acidic residues. Position 1200 is a phosphoserine (Ser-1200). Disordered stretches follow at residues 1208–1235 (SGTPSCPHCHPIRTQDTGSAVSRDTTRG) and 1253–1286 (SAEADGSSSGPSEKNTPKKPSTPILKRKNRQTGS). Polar residues predominate over residues 1221-1235 (TQDTGSAVSRDTTRG). A phosphoserine mark is found at Ser-1339, Ser-1352, and Ser-1389.

It belongs to the AKNA family. In terms of assembly, interacts with DCTN1. Interacts with MAPRE1/EB1. Interacts with ODF2. Interacts with CAMSAP3. Post-translationally, phosphorylated; phosphorylation regulates dissociation from and reassembly at the centrosome. Expressed in neural stem cells isolated at the peak of subventricular zone (SVZ): localizes at the subdistal appendages of the mother centriole in specific subtypes of neural stem cells and in almost all basal progenitors.

It is found in the cytoplasm. Its subcellular location is the cytoskeleton. The protein resides in the microtubule organizing center. The protein localises to the centrosome. It localises to the centriole. It is found in the nucleus. Functionally, centrosomal protein that plays a key role in cell delamination by regulating microtubule organization. Required for the delamination and retention of neural stem cells from the subventricular zone during neurogenesis. Also regulates the epithelial-to-mesenchymal transition in other epithelial cells. Acts by increasing centrosomal microtubule nucleation and recruiting nucleation factors and minus-end stabilizers, thereby destabilizing microtubules at the adherens junctions and mediating constriction of the apical endfoot. In addition, may also act as a transcription factor that specifically activates the expression of the CD40 receptor and its ligand CD40L/CD154, two cell surface molecules on lymphocytes that are critical for antigen-dependent-B-cell development. Binds to A/T-rich promoters. It is unclear how it can both act as a microtubule organizer and as a transcription factor; additional evidences are required to reconcile these two apparently contradictory functions. This is Microtubule organization protein AKNA from Mus musculus (Mouse).